Reading from the N-terminus, the 809-residue chain is Lon protease (809 aa).

The Lon N-terminal domain maps to 42-242; that stretch reads LVIYPLGGRP…KVLTLLKKEL (201 aa). 395–402 contacts ATP; it reads GPPGVGKT. The Lon proteolytic domain maps to 629 to 809; sequence LTGVGIVTGL…YAEVAKLVFG (181 aa). Active-site residues include Ser-716 and Lys-759.

It belongs to the peptidase S16 family. In terms of assembly, homohexamer. Organized in a ring with a central cavity.

It is found in the cytoplasm. The enzyme catalyses Hydrolysis of proteins in presence of ATP.. In terms of biological role, ATP-dependent serine protease that mediates the selective degradation of mutant and abnormal proteins as well as certain short-lived regulatory proteins. Required for cellular homeostasis and for survival from DNA damage and developmental changes induced by stress. Degrades polypeptides processively to yield small peptide fragments that are 5 to 10 amino acids long. Binds to DNA in a double-stranded, site-specific manner. The chain is Lon protease from Magnetococcus marinus (strain ATCC BAA-1437 / JCM 17883 / MC-1).